Consider the following 411-residue polypeptide: 2-acylphloroglucinol 4-prenyltransferase, chloroplastic (411 aa).

The N-terminal 91 residues, 1–91 (MELSSVSSFS…CNDQRGNSIR (91 aa)), are a transit peptide targeting the chloroplast. 8 consecutive transmembrane segments (helical) span residues 159–179 (LLGM…NQIF), 198–218 (ISVE…FILI), 226–246 (LLTS…VPPF), 253–273 (ITAF…VYYA), 278–298 (LGLA…ITFM), 333–353 (LLGT…AIIW), 356–376 (AFKS…LIFQ), and 391–411 (KSFY…YLFI).

Belongs to the UbiA prenyltransferase family. The cofactor is Mg(2+). Expressed in glandular trichomes called lupulin glands, and in early stage and mature cones. Detected in leaves, but not in root, stem and first stage of flowers. No expression in male flowers.

It localises to the plastid. Its subcellular location is the chloroplast membrane. The catalysed reaction is a 2-acylphloroglucinol + dimethylallyl diphosphate = a 2-acyl-4-prenylphloroglucinol + diphosphate. The protein operates within secondary metabolite biosynthesis. Involved in the biosynthesis of prenylated phenolics natural products which contribute to the bitter taste of beer and display broad biological activities. Catalyzes the first prenylation step in the beta-bitter acid pathway. Abble to transfer dimethylallyl diphosphate (DMAPP) or geranyl diphosphate (GPP) to phlorisovalerophenone (PIVP), phlorisobutrylphenone (PIMP) and naringenin chalcone. Can also use phlorisobutyrophenone (PIBP) and phlormethylbutanophenone (PMBP) as substrates, but not 6'-O-methylated chalcone or naringenin. This Humulus lupulus (European hop) protein is 2-acylphloroglucinol 4-prenyltransferase, chloroplastic.